Here is a 231-residue protein sequence, read N- to C-terminus: Ribosyldihydronicotinamide dehydrogenase [quinone] (231 aa).

FAD is bound by residues His12, 18–21 (FNGS), and 104–107 (LYWF). Residue 127–129 (FDV) participates in substrate binding. FAD is bound by residues 148-151 (TTGG) and Tyr156. 2 residues coordinate Zn(2+): His174 and His178. Glu194 lines the FAD pocket. At Ser197 the chain carries Phosphoserine. An FAD-binding site is contributed by Arg201. Residue Cys223 participates in Zn(2+) binding.

Belongs to the NAD(P)H dehydrogenase (quinone) family. In terms of assembly, homodimer. The cofactor is Zn(2+). Requires FAD as cofactor.

The protein localises to the cytoplasm. The enzyme catalyses 1-(beta-D-ribofuranosyl)-1,4-dihydronicotinamide + a quinone + H(+) = beta-nicotinamide D-riboside + a quinol. Functionally, the enzyme apparently serves as a quinone reductase in connection with conjugation reactions of hydroquinones involved in detoxification pathways as well as in biosynthetic processes such as the vitamin K-dependent gamma-carboxylation of glutamate residues in prothrombin synthesis. This is Ribosyldihydronicotinamide dehydrogenase [quinone] (Nqo2) from Rattus norvegicus (Rat).